The following is a 391-amino-acid chain: Ferrochelatase (391 aa).

Residues His196 and Glu281 each contribute to the Fe cation site.

This sequence belongs to the ferrochelatase family.

It localises to the cytoplasm. The enzyme catalyses heme b + 2 H(+) = protoporphyrin IX + Fe(2+). It functions in the pathway porphyrin-containing compound metabolism; protoheme biosynthesis; protoheme from protoporphyrin-IX: step 1/1. In terms of biological role, catalyzes the ferrous insertion into protoporphyrin IX. The chain is Ferrochelatase from Prochlorococcus marinus (strain MIT 9301).